Reading from the N-terminus, the 246-residue chain is uncharacterized protein (246 aa).

Positions 1-30 (MKKKQVSHAIIISVMLSFVIAVFHTIHASE) are cleaved as a signal peptide.

This is an uncharacterized protein from Bacillus subtilis (strain 168).